We begin with the raw amino-acid sequence, 298 residues long: MGVPKQRWTPEEEAALKAGVAKHGPGKWRTILRDSDFSALLRLRSNVDLKDKWRNLSVTAGGYGSREKARMALKKGRRVVPKLTAEPMDVDEKDMDNAHDTVIDVEPLAMAFEPLPFLESPDKSVARLDDLIVEAIRKLNEPSGSNKAVISGYIEDQYWPPADFQYLLSTKLKSLVNSGKLIKVNQKYRIAPSSSLGGISTKVSSSEGMNTENNNVKRLTKPQVVAELEKMKGMTREEAAAFAAKAVAEAEVAMAEAEEAARVAEAAENDAEAAKAFLDAVILSMRNRNAASMILRAC.

An HTH myb-type domain is found at 1–61 (MGVPKQRWTP…KWRNLSVTAG (61 aa)). Residues 28-57 (WRTILRDSDFSALLRLRSNVDLKDKWRNLS) constitute a DNA-binding region (H-T-H motif). The H15 domain maps to 124-192 (SVARLDDLIV…KVNQKYRIAP (69 aa)). Positions 237 to 278 (EEAAAFAAKAVAEAEVAMAEAEEAARVAEAAENDAEAAKAFL) form a coiled coil.

This sequence belongs to the histone H1/H5 family. SMH subfamily. Forms a homodimer and heterodimers.

It localises to the nucleus. The protein localises to the chromosome. Its subcellular location is the nucleolus. It is found in the telomere. In terms of biological role, binds preferentially double-stranded telomeric repeats, but may also bind to the single telomeric strand. This chain is Single myb histone 2 (SMH2), found in Zea mays (Maize).